A 160-amino-acid polypeptide reads, in one-letter code: SsrA-binding protein (160 aa).

A disordered region spans residues Lys-133–Arg-160.

The protein belongs to the SmpB family.

It is found in the cytoplasm. Its function is as follows. Required for rescue of stalled ribosomes mediated by trans-translation. Binds to transfer-messenger RNA (tmRNA), required for stable association of tmRNA with ribosomes. tmRNA and SmpB together mimic tRNA shape, replacing the anticodon stem-loop with SmpB. tmRNA is encoded by the ssrA gene; the 2 termini fold to resemble tRNA(Ala) and it encodes a 'tag peptide', a short internal open reading frame. During trans-translation Ala-aminoacylated tmRNA acts like a tRNA, entering the A-site of stalled ribosomes, displacing the stalled mRNA. The ribosome then switches to translate the ORF on the tmRNA; the nascent peptide is terminated with the 'tag peptide' encoded by the tmRNA and targeted for degradation. The ribosome is freed to recommence translation, which seems to be the essential function of trans-translation. The chain is SsrA-binding protein from Tolumonas auensis (strain DSM 9187 / NBRC 110442 / TA 4).